The primary structure comprises 176 residues: Prion-like protein doppel (176 aa).

The first 25 residues, 1 to 25 (MRKHLSWWWLATVCMLLFSHLSAVQ), serve as a signal peptide directing secretion. A flexible tail region spans residues 27 to 50 (RGIKHRIKWNRKALPSTAQITEAQ). Thr43 is a glycosylation site (O-linked (GalNAc...) threonine). Positions 51-152 (VAENRPGAFI…KHCEFWLERG (102 aa)) are globular. Disulfide bonds link Cys94-Cys145 and Cys108-Cys140. N-linked (GlcNAc...) asparagine glycosylation is found at Asn98 and Asn110. The interval 122–139 (KPDNKLHQQVLWRLVQEL) is cu(2+) binding. The GPI-anchor amidated glycine moiety is linked to residue Gly152. A propeptide spans 153–176 (AGLRVTMHQPVLLCLLALIWLTVK) (removed in mature form).

This sequence belongs to the prion family. N-glycosylated. N-glycosylated at two distinct sites. In terms of processing, O-glycosylated. Expressed in testis, in Sertoli cells, ejaculated spermatozoa and in seminal fluid (at protein level).

It is found in the cell membrane. In terms of biological role, required for normal acrosome reaction and for normal male fertility. Can bind Cu(2+). The protein is Prion-like protein doppel (PRND) of Homo sapiens (Human).